The sequence spans 295 residues: Probable protein phosphatase 2C 5 (295 aa).

Positions 23 to 294 (QYAATHMQGW…DNMTCILVLF (272 aa)) constitute a PPM-type phosphatase domain. 2 residues coordinate Mn(2+): Asp-57 and Gly-58. Residues 151–170 (NRDGKPFDMSKDHKPDDDQE) form a disordered region. 2 residues coordinate Mn(2+): Asp-237 and Asp-285.

Belongs to the PP2C family. Mg(2+) serves as cofactor. Mn(2+) is required as a cofactor.

The protein resides in the membrane. The enzyme catalyses O-phospho-L-seryl-[protein] + H2O = L-seryl-[protein] + phosphate. It catalyses the reaction O-phospho-L-threonyl-[protein] + H2O = L-threonyl-[protein] + phosphate. Functionally, enzyme with a broad specificity. The chain is Probable protein phosphatase 2C 5 from Paramecium tetraurelia.